The following is a 92-amino-acid chain: FMRFamide-like neuropeptides 5 (92 aa).

The propeptide occupies M1–A41. Phenylalanine amide is present on residues F51 and F61. The propeptide occupies S64–V82. F91 bears the Phenylalanine amide mark.

It belongs to the FARP (FMRFamide related peptide) family. As to expression, each flp gene is expressed in a distinct set of neurons. Flp-5 is expressed in the ASE sensory neurons, the 14 and M4 cholinergic pharyngeal motoneurons, and the PVT and RMG neurons. It is weakly expressed in the PB and 12 neurons. Also expressed in pharyngeal muscle.

The protein resides in the secreted. FMRFamides and FMRFamide-like peptides are neuropeptides. GAKFIRF-amide has an excitatory effect on dissected pharyngeal myogenic muscle system. This chain is FMRFamide-like neuropeptides 5, found in Caenorhabditis elegans.